Consider the following 487-residue polypeptide: Bifunctional protein GlmU (487 aa).

Residues M1–R235 are pyrophosphorylase. Residues L13–G16, K27, Q82, G87–T88, S110–D112, G147, E162, N177, and N233 contribute to the UDP-N-acetyl-alpha-D-glucosamine site. D112 is a Mg(2+) binding site. N233 is a binding site for Mg(2+). The linker stretch occupies residues E236–S256. The interval G257 to S487 is N-acetyltransferase. UDP-N-acetyl-alpha-D-glucosamine contacts are provided by R339 and K357. Residue H369 is the Proton acceptor of the active site. Positions 372 and 383 each coordinate UDP-N-acetyl-alpha-D-glucosamine. Residues A386, N392–Y393, S411, A429, and R446 each bind acetyl-CoA. The disordered stretch occupies residues E453–S487. The segment covering A468–P481 has biased composition (low complexity).

This sequence in the N-terminal section; belongs to the N-acetylglucosamine-1-phosphate uridyltransferase family. In the C-terminal section; belongs to the transferase hexapeptide repeat family. As to quaternary structure, homotrimer. The cofactor is Mg(2+).

Its subcellular location is the cytoplasm. The enzyme catalyses alpha-D-glucosamine 1-phosphate + acetyl-CoA = N-acetyl-alpha-D-glucosamine 1-phosphate + CoA + H(+). The catalysed reaction is N-acetyl-alpha-D-glucosamine 1-phosphate + UTP + H(+) = UDP-N-acetyl-alpha-D-glucosamine + diphosphate. It functions in the pathway nucleotide-sugar biosynthesis; UDP-N-acetyl-alpha-D-glucosamine biosynthesis; N-acetyl-alpha-D-glucosamine 1-phosphate from alpha-D-glucosamine 6-phosphate (route II): step 2/2. It participates in nucleotide-sugar biosynthesis; UDP-N-acetyl-alpha-D-glucosamine biosynthesis; UDP-N-acetyl-alpha-D-glucosamine from N-acetyl-alpha-D-glucosamine 1-phosphate: step 1/1. The protein operates within bacterial outer membrane biogenesis; LPS lipid A biosynthesis. Its function is as follows. Catalyzes the last two sequential reactions in the de novo biosynthetic pathway for UDP-N-acetylglucosamine (UDP-GlcNAc). The C-terminal domain catalyzes the transfer of acetyl group from acetyl coenzyme A to glucosamine-1-phosphate (GlcN-1-P) to produce N-acetylglucosamine-1-phosphate (GlcNAc-1-P), which is converted into UDP-GlcNAc by the transfer of uridine 5-monophosphate (from uridine 5-triphosphate), a reaction catalyzed by the N-terminal domain. This chain is Bifunctional protein GlmU, found in Anaeromyxobacter sp. (strain Fw109-5).